Here is a 196-residue protein sequence, read N- to C-terminus: Mediator of RNA polymerase II transcription subunit 21 (196 aa).

The disordered stretch occupies residues 52–111; it reads KIPKNASTPPVPASAPQAAQSQSQASPPPPDTANPQTGGQHADQQQQSPDGEGLPAPDSP. 2 stretches are compositionally biased toward low complexity: residues 65–76 and 87–98; these read SAPQAAQSQSQA and QTGGQHADQQQQ. A coiled-coil region spans residues 144-174; sequence SSEAEQERRIRELEGELRIVEGVREERRREL.

This sequence belongs to the Mediator complex subunit 21 family. In terms of assembly, component of the Mediator complex.

It is found in the nucleus. Functionally, component of the Mediator complex, a coactivator involved in the regulated transcription of nearly all RNA polymerase II-dependent genes. Mediator functions as a bridge to convey information from gene-specific regulatory proteins to the basal RNA polymerase II transcription machinery. Mediator is recruited to promoters by direct interactions with regulatory proteins and serves as a scaffold for the assembly of a functional preinitiation complex with RNA polymerase II and the general transcription factors. The protein is Mediator of RNA polymerase II transcription subunit 21 (srb7) of Aspergillus niger (strain ATCC MYA-4892 / CBS 513.88 / FGSC A1513).